A 234-amino-acid polypeptide reads, in one-letter code: Large ribosomal subunit protein eL6 (234 aa).

The protein belongs to the eukaryotic ribosomal protein eL6 family.

In Mesembryanthemum crystallinum (Common ice plant), this protein is Large ribosomal subunit protein eL6 (RPL6).